Reading from the N-terminus, the 189-residue chain is Pyridoxal 5'-phosphate synthase subunit PdxT (189 aa).

Residue 47–49 (GES) participates in L-glutamine binding. Residue Cys79 is the Nucleophile of the active site. Residues Arg105 and 132 to 133 (IR) contribute to the L-glutamine site. Catalysis depends on charge relay system residues His168 and Glu170.

It belongs to the glutaminase PdxT/SNO family. As to quaternary structure, in the presence of PdxS, forms a dodecamer of heterodimers. Only shows activity in the heterodimer.

It catalyses the reaction aldehydo-D-ribose 5-phosphate + D-glyceraldehyde 3-phosphate + L-glutamine = pyridoxal 5'-phosphate + L-glutamate + phosphate + 3 H2O + H(+). It carries out the reaction L-glutamine + H2O = L-glutamate + NH4(+). The protein operates within cofactor biosynthesis; pyridoxal 5'-phosphate biosynthesis. In terms of biological role, catalyzes the hydrolysis of glutamine to glutamate and ammonia as part of the biosynthesis of pyridoxal 5'-phosphate. The resulting ammonia molecule is channeled to the active site of PdxS. This chain is Pyridoxal 5'-phosphate synthase subunit PdxT, found in Methanocorpusculum labreanum (strain ATCC 43576 / DSM 4855 / Z).